The sequence spans 138 residues: Phospholipase A2 homolog (138 aa).

The N-terminal stretch at 1 to 16 (MRALWIVAVWLIGVEG) is a signal peptide. Intrachain disulfides connect C42/C131, C44/C60, C59/C111, C65/C138, C66/C104, C73/C97, and C91/C102. The important for membrane-damaging activities in eukaryotes and bacteria; heparin-binding stretch occupies residues 121–133 (KKYTYYPNFLCKG).

The protein belongs to the phospholipase A2 family. Group II subfamily. S49 sub-subfamily. Monomer. In terms of tissue distribution, expressed by the venom gland.

Its subcellular location is the secreted. In terms of biological role, snake venom phospholipase A2 homolog that lacks enzymatic activity. Shows high myotoxin activities and displays edema-inducing activities. Has cytotoxic activities against HUVEC cells (LC(50)=5.0 uL) and human lung adenocarcinoma A549 cells (LC(50)=5.2 uL). In Echis ocellatus (Ocellated saw-scaled viper), this protein is Phospholipase A2 homolog.